A 1188-amino-acid polypeptide reads, in one-letter code: DNA polymerase (1188 aa).

The tract at residues 1-74 (MALVPSPRAG…PAANNVSLTP (74 aa)) is disordered. Over residues 31–41 (STAGAAPTATR) the composition is skewed to low complexity.

It belongs to the DNA polymerase type-B family. Heterodimer with the terminal protein; this heterodimer binds to bp 9 to 18 of the genome. Forms a complex with viral pTP, DBP and hosts NFIA and POU2F1/OCT1 for initiation of replication.

The protein localises to the host nucleus. It carries out the reaction DNA(n) + a 2'-deoxyribonucleoside 5'-triphosphate = DNA(n+1) + diphosphate. Functionally, eukaryotic-type DNA polymerase involved in viral genomic replication. DNA synthesis is protein primed, and acts in a strand displacement replication. Assembles in complex with viral pTP, DBP, host NFIA and host POU2F1/OCT1 on viral origin of replication. The polymerase covalently transfers dCMP onto pTP, thereby initiating complementary strand synthesis. The sequence is that of DNA polymerase from Human adenovirus F serotype 40 (HAdV-40).